The primary structure comprises 45 residues: Large ribosomal subunit protein bL34c (45 aa).

Residues 1–21 (MIQRTLTGTNRKKTKRSGFRS) are disordered. Basic residues predominate over residues 10–19 (NRKKTKRSGF).

Belongs to the bacterial ribosomal protein bL34 family.

Its subcellular location is the plastid. The protein localises to the chloroplast. In Cyanidium caldarium (Red alga), this protein is Large ribosomal subunit protein bL34c (rpl34).